We begin with the raw amino-acid sequence, 480 residues long: MGPGPPAAGAAPSPRPLSLVARLSYAVGHFLNDLCASMWFTYLLLYLHSVRAYSSRGAGLLLLLGQVADGLCTPLVGYEADRAASCCARYGPRKAWHLVGTVCVLLSFPFIFSPCLGCGAATPEWAALLYYGPFIVIFQFGWASTQISHLSLIPELVTNDHEKVELTALRYAFTVVANITVYGAAWLLLHLQGSSRVEPTQDISISDQLGGQDVPVFRNLSLLVVGVGAVFSLLFHLGTRERRRPHAEEPGEHTPLLAPATAQPLLLWKHWLREPAFYQVGILYMTTRLIVNLSQTYMAMYLTYSLHLPKKFIATIPLVMYLSGFLSSFLMKPINKCIGRNMTYFSGLLVILAFAAWVALAEGLGVAVYAAAVLLGAGCATILVTSLAMTADLIGPHTNSGAFVYGSMSFLDKVANGLAVMAIQSLHPCPSELCCRACVSFYHWAMVAVTGGVGVAAALCLCSLLLWPTRLRRWDRDARP.

Met-1 is modified (N-acetylmethionine). The Cytoplasmic segment spans residues 1 to 26 (MGPGPPAAGAAPSPRPLSLVARLSYA). Residues 27 to 47 (VGHFLNDLCASMWFTYLLLYL) form a helical membrane-spanning segment. Topologically, residues 48 to 56 (HSVRAYSSR) are lumenal. A helical transmembrane segment spans residues 57–77 (GAGLLLLLGQVADGLCTPLVG). Over 78–97 (YEADRAASCCARYGPRKAWH) the chain is Cytoplasmic. The helical transmembrane segment at 98–118 (LVGTVCVLLSFPFIFSPCLGC) threads the bilayer. The Lumenal portion of the chain corresponds to 119-124 (GAATPE). Residues 125–145 (WAALLYYGPFIVIFQFGWAST) traverse the membrane as a helical segment. Topologically, residues 146-170 (QISHLSLIPELVTNDHEKVELTALR) are cytoplasmic. The chain crosses the membrane as a helical span at residues 171–191 (YAFTVVANITVYGAAWLLLHL). Topologically, residues 192 to 218 (QGSSRVEPTQDISISDQLGGQDVPVFR) are lumenal. A helical membrane pass occupies residues 219-239 (NLSLLVVGVGAVFSLLFHLGT). At 240–279 (RERRRPHAEEPGEHTPLLAPATAQPLLLWKHWLREPAFYQ) the chain is on the cytoplasmic side. Position 254 is a phosphothreonine; by MTOR (Thr-254). A helical membrane pass occupies residues 280 to 302 (VGILYMTTRLIVNLSQTYMAMYL). At 303 to 310 (TYSLHLPK) the chain is on the lumenal side. Residues 311 to 331 (KFIATIPLVMYLSGFLSSFLM) form a helical membrane-spanning segment. Residues 332 to 347 (KPINKCIGRNMTYFSG) are Cytoplasmic-facing. A run of 2 helical transmembrane segments spans residues 348–368 (LLVI…GVAV) and 369–389 (YAAA…SLAM). The Cytoplasmic portion of the chain corresponds to 390–402 (TADLIGPHTNSGA). Residues 403–423 (FVYGSMSFLDKVANGLAVMAI) traverse the membrane as a helical segment. Over 424–446 (QSLHPCPSELCCRACVSFYHWAM) the chain is Lumenal. A helical membrane pass occupies residues 447–467 (VAVTGGVGVAAALCLCSLLLW). The Cytoplasmic portion of the chain corresponds to 468-480 (PTRLRRWDRDARP).

This sequence belongs to the major facilitator superfamily. Post-translationally, phosphorylation at Thr-254 by MTOR via mTORC1 pathway promotes cysteine transport in lysosomes, thereby regulating lysosomal cysteine and cystine storage and redox homeostasis. Widely expressed, with high expression in primary melanocytes.

The protein localises to the melanosome membrane. Its subcellular location is the lysosome membrane. It carries out the reaction L-cysteine(in) = L-cysteine(out). Its function is as follows. Transporter that mediates the import of cysteine into melanosomes, thereby regulating skin pigmentation. In melanosomes, cysteine import is required both for normal levels of cystine, the oxidized dimer of cysteine, and provide cysteine for the production of the cysteinyldopas used in pheomelanin synthesis, thereby regulating skin pigmentation. Also catalyzes import of cysteine into lysosomes in non-pigmented cells, regulating lysosomal cystine and cysteine storage, which is essnetial for redox homeostasis. The sequence is that of Major facilitator superfamily domain-containing protein 12 from Homo sapiens (Human).